The sequence spans 199 residues: Charged multivesicular body protein 1b (199 aa).

Coiled-coil stretches lie at residues 10–48 and 178–199; these read NLKF…MEVA and TSVA…RDQV. Residues 167-199 form a disordered region; that stretch reads ELPQGQTGSVGTSVASAEQDELSQRLARLRDQV. Residues 170 to 182 show a composition bias toward polar residues; it reads QGQTGSVGTSVAS. The MIT-interacting motif motif lies at 186-196; the sequence is DELSQRLARLR.

This sequence belongs to the SNF7 family. In terms of assembly, probable peripherally associated component of the endosomal sorting required for transport complex III (ESCRT-III).

It is found in the cytoplasm. The protein localises to the cytosol. The protein resides in the endosome. It localises to the late endosome membrane. Functionally, probable peripherally associated component of the endosomal sorting required for transport complex III (ESCRT-III) which is involved in multivesicular bodies (MVBs) formation and sorting of endosomal cargo proteins into MVBs. MVBs contain intraluminal vesicles (ILVs) that are generated by invagination and scission from the limiting membrane of the endosome and mostly are delivered to lysosomes enabling degradation of membrane proteins, such as stimulated growth factor receptors, lysosomal enzymes and lipids. This Gallus gallus (Chicken) protein is Charged multivesicular body protein 1b (CHMP1B).